The following is a 50-amino-acid chain: Large ribosomal subunit protein bL33 (50 aa).

Belongs to the bacterial ribosomal protein bL33 family.

The chain is Large ribosomal subunit protein bL33 from Solibacter usitatus (strain Ellin6076).